A 60-amino-acid polypeptide reads, in one-letter code: Large ribosomal subunit protein bL32 (60 aa).

A compositionally biased stretch (basic residues) spans 1-19 (MAVPKRRTSKRRKRARNTH). Residues 1 to 20 (MAVPKRRTSKRRKRARNTHK) form a disordered region.

This sequence belongs to the bacterial ribosomal protein bL32 family.

The chain is Large ribosomal subunit protein bL32 from Gemmatimonas aurantiaca (strain DSM 14586 / JCM 11422 / NBRC 100505 / T-27).